The chain runs to 380 residues: Large ribosomal subunit protein mL38 (380 aa).

The transit peptide at 1–26 directs the protein to the mitochondrion; that stretch reads MAAPWWRAALCECRRWRGFSTSAVLG. Residues 99-127 adopt a coiled-coil conformation; it reads RTQQLLERKQAIQELRANVEEERAARLRT.

It belongs to the phosphatidylethanolamine-binding protein family. Mitochondrion-specific ribosomal protein mL38 subfamily. As to quaternary structure, component of the mitochondrial large ribosomal subunit (mt-LSU). Mature mammalian 55S mitochondrial ribosomes consist of a small (28S) and a large (39S) subunit. The 28S small subunit contains a 12S ribosomal RNA (12S mt-rRNA) and 30 different proteins. The 39S large subunit contains a 16S rRNA (16S mt-rRNA), a copy of mitochondrial valine transfer RNA (mt-tRNA(Val)), which plays an integral structural role, and 52 different proteins. mL38 is located at the central protuberance.

It localises to the mitochondrion. The protein is Large ribosomal subunit protein mL38 (MRPL38) of Homo sapiens (Human).